Here is a 111-residue protein sequence, read N- to C-terminus: MQRERTNETSLRVVSKEKDSIIVEMINYDNTLLRTLVEEILKDDQVIEARYYIKHPIIDNPQIYVKVKSGKPQAAIKRSIRKLSKLYEDLGAQVEKEIEKYRSNHIIKTTE.

The protein belongs to the archaeal Rpo11/eukaryotic RPB11/RPC19 RNA polymerase subunit family. In terms of assembly, part of the RNA polymerase complex.

The protein resides in the cytoplasm. It carries out the reaction RNA(n) + a ribonucleoside 5'-triphosphate = RNA(n+1) + diphosphate. Its function is as follows. DNA-dependent RNA polymerase (RNAP) catalyzes the transcription of DNA into RNA using the four ribonucleoside triphosphates as substrates. The chain is DNA-directed RNA polymerase subunit Rpo11 from Thermoplasma volcanium (strain ATCC 51530 / DSM 4299 / JCM 9571 / NBRC 15438 / GSS1).